Consider the following 260-residue polypeptide: Protein-L-isoaspartate O-methyltransferase (260 aa).

The tract at residues 1–27 (MKSPVAGAVLDPSTPPPTTGTSWRWPG) is disordered. The active site involves serine 92.

The protein belongs to the methyltransferase superfamily. L-isoaspartyl/D-aspartyl protein methyltransferase family.

It localises to the cytoplasm. The catalysed reaction is [protein]-L-isoaspartate + S-adenosyl-L-methionine = [protein]-L-isoaspartate alpha-methyl ester + S-adenosyl-L-homocysteine. In terms of biological role, catalyzes the methyl esterification of L-isoaspartyl residues in peptides and proteins that result from spontaneous decomposition of normal L-aspartyl and L-asparaginyl residues. It plays a role in the repair and/or degradation of damaged proteins. The protein is Protein-L-isoaspartate O-methyltransferase (pcm) of Aeropyrum pernix (strain ATCC 700893 / DSM 11879 / JCM 9820 / NBRC 100138 / K1).